The primary structure comprises 292 residues: Malonyl-S-ACP:biotin-protein carboxyltransferase MADD (292 aa).

Residues 1 to 281 (MEIMMGQGRL…RGKVMAMMDK (281 aa)) enclose the CoA carboxyltransferase C-terminal domain.

The protein localises to the cytoplasm. It carries out the reaction N(6)-biotinyl-L-lysyl-[protein] + malonyl-[ACP] = N(6)-carboxybiotinyl-L-lysyl-[protein] + acetyl-[ACP]. Gamma subunit of the biotin-dependent malonate decarboxylase multienzyme complex (EC 7.2.4.4). The two subunits MADC and MADD are required for the transfer of the malonate carboxy group from the acyl-carrier protein (ACP) to the prosthetic group of the biotin carrier MADF. Required for the regeneration of ACP. The protein is Malonyl-S-ACP:biotin-protein carboxyltransferase MADD (madD) of Malonomonas rubra.